A 212-amino-acid chain; its full sequence is Dihydrophenazinedicarboxylate synthase (212 aa).

Residue Ser8 participates in substrate binding. Residues Arg63–Ala66 and Cys78–Thr79 contribute to the FMN site. His80 contacts substrate. FMN contacts are provided by residues Arg84–Lys85 and Gln107. Substrate-binding residues include Arg129 and Ser137. FMN contacts are provided by residues Gln142–Ser143 and Arg195.

It belongs to the pyridoxamine 5'-phosphate oxidase family. FMN serves as cofactor.

The catalysed reaction is (1R,6R)-1,4,5,5a,6,9-hexahydrophenazine-1,6-dicarboxylate + O2 = (1R,10aS)-1,4,10,10a-tetrahydrophenazine-1,6-dicarboxylate + H2O2. The enzyme catalyses (1R,10aS)-1,4,10,10a-tetrahydrophenazine-1,6-dicarboxylate + O2 = (5aS)-5,5a-dihydrophenazine-1,6-dicarboxylate + H2O2. It catalyses the reaction (1R,10aS)-1,4,10,10a-tetrahydrophenazine-1-carboxylate + O2 = (10aS)-10,10a-dihydrophenazine-1-carboxylate + H2O2. It carries out the reaction (1R)-1,4,5,10-tetrahydrophenazine-1-carboxylate + O2 = (10aS)-10,10a-dihydrophenazine-1-carboxylate + H2O2. Its pathway is antibiotic biosynthesis; phenazine biosynthesis. Involved in the biosynthesis of the antibiotic phenazine, a nitrogen-containing heterocyclic molecule having important roles in virulence, competition and biological control. Catalyzes several oxidations in the terminal steps of core phenazine biosynthesis. It oxidizes both hexahydrophenazine-1,6-dicarboxylic acid (HHPDC) and tetrahydrophenazine-1-carboxylic acid (THPCA) and thereby contributes to the generation of both phenazine-1,6-dicarboxylic acid (PDC) and phenazine-1-carboxylic acid (PCA). It synthesizes phenazines in their reduced form, which are the likely end products in vivo. The sequence is that of Dihydrophenazinedicarboxylate synthase from Burkholderia lata (strain ATCC 17760 / DSM 23089 / LMG 22485 / NCIMB 9086 / R18194 / 383).